A 938-amino-acid polypeptide reads, in one-letter code: Protein translocase subunit SecA (938 aa).

ATP contacts are provided by residues Gln90, 108 to 112, and Asp504; that span reads GEGKT.

It belongs to the SecA family. As to quaternary structure, monomer and homodimer. Part of the essential Sec protein translocation apparatus which comprises SecA, SecYEG and auxiliary proteins SecDF. Other proteins may also be involved.

The protein localises to the cell inner membrane. It localises to the cellular thylakoid membrane. It is found in the cytoplasm. It carries out the reaction ATP + H2O + cellular proteinSide 1 = ADP + phosphate + cellular proteinSide 2.. Its function is as follows. Part of the Sec protein translocase complex. Interacts with the SecYEG preprotein conducting channel. Has a central role in coupling the hydrolysis of ATP to the transfer of proteins into and across the cell membrane, serving as an ATP-driven molecular motor driving the stepwise translocation of polypeptide chains across the membrane. Probably participates in protein translocation into and across both the cytoplasmic and thylakoid membranes in cyanobacterial cells. This chain is Protein translocase subunit SecA, found in Picosynechococcus sp. (strain ATCC 27264 / PCC 7002 / PR-6) (Agmenellum quadruplicatum).